A 102-amino-acid chain; its full sequence is Heat shock protein HspQ (102 aa).

Belongs to the HspQ family.

It localises to the cytoplasm. Its function is as follows. Involved in the degradation of certain denaturated proteins, including DnaA, during heat shock stress. The sequence is that of Heat shock protein HspQ from Pectobacterium atrosepticum (strain SCRI 1043 / ATCC BAA-672) (Erwinia carotovora subsp. atroseptica).